A 369-amino-acid polypeptide reads, in one-letter code: S-(hydroxymethyl)glutathione dehydrogenase (369 aa).

7 residues coordinate Zn(2+): Cys40, His62, Cys92, Cys95, Cys98, Cys106, and Cys169.

It belongs to the zinc-containing alcohol dehydrogenase family. Class-III subfamily. As to quaternary structure, homodimer. The cofactor is Zn(2+).

The protein localises to the cytoplasm. The enzyme catalyses S-(hydroxymethyl)glutathione + NADP(+) = S-formylglutathione + NADPH + H(+). It carries out the reaction S-(hydroxymethyl)glutathione + NAD(+) = S-formylglutathione + NADH + H(+). It catalyses the reaction a primary alcohol + NAD(+) = an aldehyde + NADH + H(+). The catalysed reaction is a secondary alcohol + NAD(+) = a ketone + NADH + H(+). The enzyme catalyses S-nitrosoglutathione + NADH + H(+) = S-(hydroxysulfenamide)glutathione + NAD(+). Functionally, has high formaldehyde dehydrogenase activity in the presence of glutathione and catalyzes the oxidation of normal alcohols in a reaction that is not GSH-dependent. In addition, hemithiolacetals other than those formed from GSH, including omega-thiol fatty acids, also are substrates. Also acts as a S-nitroso-glutathione reductase by catalyzing the NADH-dependent reduction of S-nitrosoglutathione. The sequence is that of S-(hydroxymethyl)glutathione dehydrogenase (frmA) from Escherichia coli (strain SMS-3-5 / SECEC).